The chain runs to 194 residues: Imidazoleglycerol-phosphate dehydratase (194 aa).

It belongs to the imidazoleglycerol-phosphate dehydratase family.

The protein resides in the cytoplasm. The catalysed reaction is D-erythro-1-(imidazol-4-yl)glycerol 3-phosphate = 3-(imidazol-4-yl)-2-oxopropyl phosphate + H2O. Its pathway is amino-acid biosynthesis; L-histidine biosynthesis; L-histidine from 5-phospho-alpha-D-ribose 1-diphosphate: step 6/9. The chain is Imidazoleglycerol-phosphate dehydratase from Caldicellulosiruptor bescii (strain ATCC BAA-1888 / DSM 6725 / KCTC 15123 / Z-1320) (Anaerocellum thermophilum).